Consider the following 395-residue polypeptide: Glutamate N-acetyltransferase (395 aa).

Residues threonine 146, lysine 169, threonine 180, glutamate 263, asparagine 390, and threonine 395 each coordinate substrate. The active-site Nucleophile is the threonine 180.

This sequence belongs to the ArgJ family. In terms of assembly, heterotetramer of two alpha and two beta chains.

The protein localises to the cytoplasm. It carries out the reaction N(2)-acetyl-L-ornithine + L-glutamate = N-acetyl-L-glutamate + L-ornithine. Its pathway is amino-acid biosynthesis; L-arginine biosynthesis; L-ornithine and N-acetyl-L-glutamate from L-glutamate and N(2)-acetyl-L-ornithine (cyclic): step 1/1. Functionally, catalyzes the transfer of the acetyl group from N(2)-acetylornithine to glutamate, forming N-acetylglutamate and L-ornithine. The chain is Glutamate N-acetyltransferase from Methanosarcina mazei (strain ATCC BAA-159 / DSM 3647 / Goe1 / Go1 / JCM 11833 / OCM 88) (Methanosarcina frisia).